Consider the following 211-residue polypeptide: FMN-dependent NADH:quinone oxidoreductase 2 (211 aa).

102-105 (MWNF) is an FMN binding site.

It belongs to the azoreductase type 1 family. In terms of assembly, homodimer. The cofactor is FMN.

The catalysed reaction is 2 a quinone + NADH + H(+) = 2 a 1,4-benzosemiquinone + NAD(+). The enzyme catalyses N,N-dimethyl-1,4-phenylenediamine + anthranilate + 2 NAD(+) = 2-(4-dimethylaminophenyl)diazenylbenzoate + 2 NADH + 2 H(+). Functionally, quinone reductase that provides resistance to thiol-specific stress caused by electrophilic quinones. In terms of biological role, also exhibits azoreductase activity. Catalyzes the reductive cleavage of the azo bond in aromatic azo compounds to the corresponding amines. This chain is FMN-dependent NADH:quinone oxidoreductase 2, found in Bacillus thuringiensis subsp. konkukian (strain 97-27).